The primary structure comprises 178 residues: MKDDNIENNNIEEENLNIETQVVANEEIALLKAEIKELQDKLIRTTAEIDNTRKRLEKARDEAKDYAIATFAKELLNVSDNLSRALAHKPSNADVEVTNIISGVQMTKDELDKIFHKHHIEEIKPEIGSMFDYNVHNAISHIEHPDHKPNSIITLMQSGYKIRDRLLRPATVQVVKKP.

This sequence belongs to the GrpE family. As to quaternary structure, homodimer.

The protein localises to the cytoplasm. Its function is as follows. Participates actively in the response to hyperosmotic and heat shock by preventing the aggregation of stress-denatured proteins, in association with DnaK and GrpE. It is the nucleotide exchange factor for DnaK and may function as a thermosensor. Unfolded proteins bind initially to DnaJ; upon interaction with the DnaJ-bound protein, DnaK hydrolyzes its bound ATP, resulting in the formation of a stable complex. GrpE releases ADP from DnaK; ATP binding to DnaK triggers the release of the substrate protein, thus completing the reaction cycle. Several rounds of ATP-dependent interactions between DnaJ, DnaK and GrpE are required for fully efficient folding. This Rickettsia typhi (strain ATCC VR-144 / Wilmington) protein is Protein GrpE.